The chain runs to 148 residues: Large ribosomal subunit protein bL19 (148 aa).

The protein belongs to the bacterial ribosomal protein bL19 family.

Its function is as follows. This protein is located at the 30S-50S ribosomal subunit interface and may play a role in the structure and function of the aminoacyl-tRNA binding site. In Beijerinckia indica subsp. indica (strain ATCC 9039 / DSM 1715 / NCIMB 8712), this protein is Large ribosomal subunit protein bL19.